The following is a 313-amino-acid chain: Alpha/beta-gliadin clone PW8142 (313 aa).

Residues M1–V20 form the signal peptide. A compositionally biased stretch (low complexity) spans V22–P55. 2 disordered regions span residues V22–Q122 and Q234–Q272. Composition is skewed to pro residues over residues P56–S68 and F78–P101. Low complexity-rich tracts occupy residues Y102 to Q122 and Q234 to Q264.

Belongs to the gliadin/glutenin family. Post-translationally, substrate of transglutaminase.

Functionally, gliadin is the major seed storage protein in wheat. This Triticum aestivum (Wheat) protein is Alpha/beta-gliadin clone PW8142.